A 151-amino-acid polypeptide reads, in one-letter code: Transcriptional regulator MraZ (151 aa).

SpoVT-AbrB domains are found at residues 5-52 and 81-124; these read ANAI…PLPE and AVDL…DEDA.

The protein belongs to the MraZ family. In terms of assembly, forms oligomers.

The protein localises to the cytoplasm. The protein resides in the nucleoid. In Pseudomonas aeruginosa (strain LESB58), this protein is Transcriptional regulator MraZ.